The primary structure comprises 470 residues: Cysteine--tRNA ligase (470 aa).

Residue Cys27 participates in Zn(2+) binding. Positions 29–39 (PTVYNFFHIGN) match the 'HIGH' region motif. 3 residues coordinate Zn(2+): Cys211, His236, and Glu240. The 'KMSKS' region motif lies at 268–272 (KMSKS). Residue Lys271 participates in ATP binding.

It belongs to the class-I aminoacyl-tRNA synthetase family. Monomer. Zn(2+) is required as a cofactor.

The protein resides in the cytoplasm. It catalyses the reaction tRNA(Cys) + L-cysteine + ATP = L-cysteinyl-tRNA(Cys) + AMP + diphosphate. This Clostridium botulinum (strain Eklund 17B / Type B) protein is Cysteine--tRNA ligase.